A 693-amino-acid polypeptide reads, in one-letter code: Polyribonucleotide nucleotidyltransferase (693 aa).

Mg(2+)-binding residues include D489 and D495. The region spanning P556 to I615 is the KH domain. The 69-residue stretch at G625–R693 folds into the S1 motif domain.

Belongs to the polyribonucleotide nucleotidyltransferase family. As to quaternary structure, component of the RNA degradosome, which is a multiprotein complex involved in RNA processing and mRNA degradation. It depends on Mg(2+) as a cofactor.

The protein localises to the cytoplasm. It carries out the reaction RNA(n+1) + phosphate = RNA(n) + a ribonucleoside 5'-diphosphate. Functionally, involved in mRNA degradation. Catalyzes the phosphorolysis of single-stranded polyribonucleotides processively in the 3'- to 5'-direction. In Francisella tularensis subsp. mediasiatica (strain FSC147), this protein is Polyribonucleotide nucleotidyltransferase.